A 556-amino-acid chain; its full sequence is Formate--tetrahydrofolate ligase (556 aa).

Position 65-72 (65-72) interacts with ATP; that stretch reads TPAGEGKS.

This sequence belongs to the formate--tetrahydrofolate ligase family.

It carries out the reaction (6S)-5,6,7,8-tetrahydrofolate + formate + ATP = (6R)-10-formyltetrahydrofolate + ADP + phosphate. It participates in one-carbon metabolism; tetrahydrofolate interconversion. This Streptococcus pneumoniae (strain JJA) protein is Formate--tetrahydrofolate ligase.